Consider the following 137-residue polypeptide: Large ribosomal subunit protein uL16c (137 aa).

It belongs to the universal ribosomal protein uL16 family. As to quaternary structure, part of the 50S ribosomal subunit.

The protein localises to the plastid. Its subcellular location is the chloroplast. The sequence is that of Large ribosomal subunit protein uL16c from Adiantum capillus-veneris (Maidenhair fern).